Here is a 156-residue protein sequence, read N- to C-terminus: Small ribosomal subunit protein uS7 (156 aa).

This sequence belongs to the universal ribosomal protein uS7 family. Part of the 30S ribosomal subunit. Contacts proteins S9 and S11.

One of the primary rRNA binding proteins, it binds directly to 16S rRNA where it nucleates assembly of the head domain of the 30S subunit. Is located at the subunit interface close to the decoding center, probably blocks exit of the E-site tRNA. This is Small ribosomal subunit protein uS7 from Parvibaculum lavamentivorans (strain DS-1 / DSM 13023 / NCIMB 13966).